The sequence spans 373 residues: Glutamine synthetase (373 aa).

The residue at position 2 (Ala-2) is an N-acetylalanine. Positions Ala-2–Lys-25 are required for glutamine-induced ubiquitination by CRL4(CRBN) and proteasomal degradation. An N6-acetyllysine mark is found at Lys-11 and Lys-14. Residues Glu-24–Gln-106 form the GS beta-grasp domain. A Phosphotyrosine modification is found at Tyr-104. Residues Leu-113 to Asn-373 enclose the GS catalytic domain. ATP is bound at residue Glu-134. Mn(2+) contacts are provided by Glu-134, Glu-136, Glu-196, and Glu-203. Residue Glu-203–Pro-208 coordinates ATP. Asn-246–Trp-247 serves as a coordination point for L-glutamate. A Mn(2+)-binding site is contributed by His-253. ATP-binding positions include Asn-255 to Ser-257, Arg-319, and Arg-324. Arg-319 contacts L-glutamate. Position 336 to 338 (Tyr-336 to Glu-338) interacts with ADP. A Mn(2+)-binding site is contributed by Glu-338. Residue Arg-340 participates in L-glutamate binding. Ser-343 is modified (phosphoserine).

It belongs to the glutamine synthetase family. In terms of assembly, decamer; composed of two pentamers. Interacts with PALMD. Interacts with RHOJ. Interacts with BEST2; this interaction tethers a fraction of GLUL to the membrane, causing a decrease of cytosolic glutamine synthase (GS) activity and inhibits the chloride channel activity of BEST2 by affecting the gating at the aperture in the absence of intracellular glutamate. Mg(2+) serves as cofactor. Mn(2+) is required as a cofactor. In terms of processing, palmitoylated; undergoes autopalmitoylation. Post-translationally, acetylated by EP300/p300; acetylation is stimulated by increased glutamine levels and promotes ubiquitin-mediated proteasomal degradation. Ubiquitinated by ZNRF1. Ubiquitinated by the DCX (DDB1-CUL4-X-box) E3 ubiquitin-protein ligase complex called CRL4(CRBN), leading to proteasomal degradation.

It is found in the cytoplasm. Its subcellular location is the cytosol. The protein resides in the microsome. The protein localises to the mitochondrion. It localises to the cell membrane. It catalyses the reaction L-glutamate + NH4(+) + ATP = L-glutamine + ADP + phosphate + H(+). The catalysed reaction is L-cysteinyl-[protein] + hexadecanoyl-CoA = S-hexadecanoyl-L-cysteinyl-[protein] + CoA. With respect to regulation, glutamine synthetase activity is inhibited by methionine sulfoximine (MSO). Its function is as follows. Glutamine synthetase that catalyzes the ATP-dependent conversion of glutamate and ammonia to glutamine. Its role depends on tissue localization: in the brain, it regulates the levels of toxic ammonia and converts neurotoxic glutamate to harmless glutamine, whereas in the liver, it is one of the enzymes responsible for the removal of ammonia. Plays a key role in ammonium detoxification during erythropoiesis: the glutamine synthetase activity is required to remove ammonium generated by porphobilinogen deaminase (HMBS) during heme biosynthesis to prevent ammonium accumulation and oxidative stress. Essential for proliferation of fetal skin fibroblasts. Independently of its glutamine synthetase activity, required for endothelial cell migration during vascular development. Involved in angiogenesis by regulating membrane localization and activation of the GTPase RHOJ, possibly by promoting RHOJ palmitoylation. May act as a palmitoyltransferase for RHOJ: able to autopalmitoylate and then transfer the palmitoyl group to RHOJ. Plays a role in ribosomal 40S subunit biogenesis. Through the interaction with BEST2, inhibits BEST2 channel activity by affecting the gating at the aperture in the absence of intracellular L-glutamate, but sensitizes BEST2 to intracellular L-glutamate, which promotes the opening of BEST2 and thus relieves its inhibitory effect on BEST2. This is Glutamine synthetase from Cricetulus griseus (Chinese hamster).